Reading from the N-terminus, the 326-residue chain is MCPLTLQVTGLMNVSEPNSSFAFVNEFILQGFTCEWTIQIFLFSLFTTTYALTITGNGAIAFVLWCDWRLHTPMYMFLGNFSFLEIWYVSSTVPKMLVNFLSEKKNISFAGCFLQFYFFFSLGTSECLLLTVMAFDQYLAICRPLLYPNIMTGHLCAKLVILCWVCGFLWFLIPIVLISQMPFCGPNIIDHVVCDPGPRFALDCVSAPRIQLFCYTLSSLVIFGNFLFIIGSYTLVLKAVLGMPSSTGRHKAFSTCGSHLAVVSLCYSSLMVMYVSPGLGHSTGMQKIETLFYAMVTPLFNPLIYSLQNKEIKAALRKVLGSSNII.

Over 1 to 44 (MCPLTLQVTGLMNVSEPNSSFAFVNEFILQGFTCEWTIQIFLFS) the chain is Extracellular. Asn-13 and Asn-18 each carry an N-linked (GlcNAc...) asparagine glycan. Residues 45 to 65 (LFTTTYALTITGNGAIAFVLW) traverse the membrane as a helical segment. Over 66 to 72 (CDWRLHT) the chain is Cytoplasmic. The helical transmembrane segment at 73 to 93 (PMYMFLGNFSFLEIWYVSSTV) threads the bilayer. Topologically, residues 94–112 (PKMLVNFLSEKKNISFAGC) are extracellular. Asn-106 carries an N-linked (GlcNAc...) asparagine glycan. Cysteines 112 and 194 form a disulfide. Residues 113 to 133 (FLQFYFFFSLGTSECLLLTVM) form a helical membrane-spanning segment. Over 134–158 (AFDQYLAICRPLLYPNIMTGHLCAK) the chain is Cytoplasmic. A helical transmembrane segment spans residues 159–179 (LVILCWVCGFLWFLIPIVLIS). Residues 180 to 216 (QMPFCGPNIIDHVVCDPGPRFALDCVSAPRIQLFCYT) lie on the Extracellular side of the membrane. The chain crosses the membrane as a helical span at residues 217-237 (LSSLVIFGNFLFIIGSYTLVL). Over 238-259 (KAVLGMPSSTGRHKAFSTCGSH) the chain is Cytoplasmic. The helical transmembrane segment at 260 to 280 (LAVVSLCYSSLMVMYVSPGLG) threads the bilayer. The Extracellular portion of the chain corresponds to 281–287 (HSTGMQK). The chain crosses the membrane as a helical span at residues 288–308 (IETLFYAMVTPLFNPLIYSLQ). Residues 309–326 (NKEIKAALRKVLGSSNII) lie on the Cytoplasmic side of the membrane.

This sequence belongs to the G-protein coupled receptor 1 family.

Its subcellular location is the cell membrane. Its function is as follows. Odorant receptor. This is Olfactory receptor 11H12 (OR11H12) from Homo sapiens (Human).